A 211-amino-acid polypeptide reads, in one-letter code: Uridine kinase (211 aa).

Residue Gly12–Thr19 participates in ATP binding.

This sequence belongs to the uridine kinase family.

It is found in the cytoplasm. The enzyme catalyses uridine + ATP = UMP + ADP + H(+). It catalyses the reaction cytidine + ATP = CMP + ADP + H(+). It functions in the pathway pyrimidine metabolism; CTP biosynthesis via salvage pathway; CTP from cytidine: step 1/3. The protein operates within pyrimidine metabolism; UMP biosynthesis via salvage pathway; UMP from uridine: step 1/1. This Anoxybacillus flavithermus (strain DSM 21510 / WK1) protein is Uridine kinase.